Reading from the N-terminus, the 459-residue chain is Putrescine aminotransferase (459 aa).

Pyridoxal 5'-phosphate contacts are provided by residues 150–151 (GT) and Q274. N6-(pyridoxal phosphate)lysine is present on K300. T332 serves as a coordination point for pyridoxal 5'-phosphate.

Belongs to the class-III pyridoxal-phosphate-dependent aminotransferase family. Putrescine aminotransferase subfamily. It depends on pyridoxal 5'-phosphate as a cofactor.

The enzyme catalyses an alkane-alpha,omega-diamine + 2-oxoglutarate = an omega-aminoaldehyde + L-glutamate. It carries out the reaction putrescine + 2-oxoglutarate = 1-pyrroline + L-glutamate + H2O. It catalyses the reaction cadaverine + 2-oxoglutarate = 5-aminopentanal + L-glutamate. It participates in amine and polyamine degradation; putrescine degradation; 4-aminobutanal from putrescine (transaminase route): step 1/1. Catalyzes the aminotransferase reaction from putrescine to 2-oxoglutarate, leading to glutamate and 4-aminobutanal, which spontaneously cyclizes to form 1-pyrroline. This is the first step in one of two pathways for putrescine degradation, where putrescine is converted into 4-aminobutanoate (gamma-aminobutyrate or GABA) via 4-aminobutanal. Also functions as a cadaverine transaminase in a a L-lysine degradation pathway to succinate that proceeds via cadaverine, glutarate and L-2-hydroxyglutarate. The polypeptide is Putrescine aminotransferase (Salmonella heidelberg (strain SL476)).